Consider the following 377-residue polypeptide: Aquaporin-2 (377 aa).

Residues 1–14 lie on the Cytoplasmic side of the membrane; sequence MAANKGINGGIKNH. The chain crosses the membrane as a helical span at residues 15–35; it reads FIAFLGEFVGTFLFLFFAYGG. The Extracellular segment spans residues 36–56; the sequence is TQTANQTSQKNPSIVASPDIN. Asparagine 40 is a glycosylation site (N-linked (GlcNAc...) asparagine). The chain crosses the membrane as a helical span at residues 57–77; sequence QLLYIALIFGFSLTVNVWIFF. Residues 78 to 87 are Cytoplasmic-facing; it reads RVSGGLFNPA. The NPA 1 motif lies at 85-87; the sequence is NPA. A helical membrane pass occupies residues 88 to 108; sequence VTIALCLVGVVGPVRSIFIFI. Residues 109–144 are Extracellular-facing; that stretch reads AQVVASIAAAAAVRGLLPGDTVLFSCALAPGTSIAQ. The chain crosses the membrane as a helical span at residues 145–165; the sequence is GLFLEMFFTIELVFTILMLAA. Over 166 to 171 the chain is Cytoplasmic; the sequence is EKTKVT. Residues 172–192 traverse the membrane as a helical segment; the sequence is FVAPVGIGLSLFVAELMGVAW. Over 193–215 the chain is Extracellular; it reads TGGALNPARAFGAEVIGGFRGYH. The NPA 2 signature appears at 198–200; that stretch reads NPA. Residues 216–236 form a helical membrane-spanning segment; it reads WIYWLGPLMGAVLAAGFYKVI. Topologically, residues 237-377 are cytoplasmic; that stretch reads KFLNYEQVNG…ANAQNRAKTP (141 aa). Disordered stretches follow at residues 278–332 and 358–377; these read LFQT…RENE and RLSGERYVQDANAQNRAKTP. 2 stretches are compositionally biased toward polar residues: residues 315-328 and 368-377; these read PAQQQTWPHSASTI and ANAQNRAKTP.

This sequence belongs to the MIP/aquaporin (TC 1.A.8) family.

It is found in the membrane. The catalysed reaction is H2O(in) = H2O(out). It carries out the reaction glycerol(in) = glycerol(out). Its function is as follows. Water channel required to facilitate the transport of water across membranes. Involved in conidiation. This chain is Aquaporin-2, found in Botryotinia fuckeliana (strain B05.10) (Noble rot fungus).